Reading from the N-terminus, the 580-residue chain is Purine permease (580 aa).

A run of 12 helical transmembrane segments spans residues 68–88 (PLVL…AGVI), 107–127 (SQYL…VQMF), 136–156 (YYVG…ITVA), 184–204 (YGAL…LSFM), 211–231 (ALFP…SLIG), 263–283 (LPWG…TIIL), 294–314 (SCAV…CGYF), 385–405 (LGNG…MSVF), 426–446 (CCFF…LVAI), 447–467 (PSSV…ISGV), 481–501 (FILT…DWFS), and 522–542 (LVMA…NLIL).

This sequence belongs to the nucleobase:cation symporter-2 (NCS2) (TC 2.A.40) family.

It is found in the membrane. In terms of biological role, able to transport with low efficiency all natural purines as well as purine analogs. The chain is Purine permease (uapC) from Emericella nidulans (strain FGSC A4 / ATCC 38163 / CBS 112.46 / NRRL 194 / M139) (Aspergillus nidulans).